The sequence spans 718 residues: Protein Hook homolog 3 (718 aa).

Met-1 is modified (N-acetylmethionine). The segment at 1–164 (MFNVESVERV…QELMSKESPV (164 aa)) is sufficient for interaction with microtubules. Ser-6 carries the phosphoserine modification. The Calponin-homology (CH) domain occupies 10 to 126 (VELCESLLTW…RMLQLILGCA (117 aa)). Coiled-coil stretches lie at residues 168-433 (HDAY…VQAQ) and 462-663 (EIRE…MEEK). A Phosphoserine modification is found at Ser-238. The segment at 450–671 (SSDSLAAEIV…EKYIVSAWYN (222 aa)) is sufficient for interaction with IIGP1. The required for association with Golgi stretch occupies residues 553 to 718 (EKLHEANNEL…PGHVQPATAR (166 aa)). The tract at residues 682–718 (EDRLASTGSGQSFLARQRQATSTRRSYPGHVQPATAR) is disordered. Positions 687–706 (STGSGQSFLARQRQATSTRR) are enriched in polar residues. Phosphoserine occurs at positions 693 and 707.

It belongs to the hook family. In terms of assembly, self-associates. Component of the FTS/Hook/FHIP complex (FHF complex), composed of AKTIP/FTS, FHIP1B, and one or more members of the Hook family of proteins HOOK1, HOOK2, and HOOK3. May interact directly with AKTIP/FTS, HOOK1 and HOOK2. Associates with several subunits of the homotypic vesicular sorting complex (the HOPS complex) including VPS16 and VPS41; these interactions may be indirect. Interacts with IIGP1. Interacts with MSR1, and this association is stimulated by ligand binding to MSR1. Interacts with microtubules. Part of a tripartite complex with dynein and dynactin, acts an adapter linking the dynein motor complex and dynactin. Interacts with dynein intermediate chain and dynactin (DCTN1). Interacts with CCDC181. Interacts with LRGUK. (Microbial infection) Interacts with Salmonella typhimurium spiC. As to expression, expressed in brain, cerebellum, heart, intestine, kidney, liver, lung, skeletal muscle, spleen and stomach (at protein level).

It is found in the cytoplasm. The protein localises to the cytoskeleton. The protein resides in the golgi apparatus. Acts as an adapter protein linking the dynein motor complex to various cargos and converts dynein from a non-processive to a highly processive motor in the presence of dynactin. Facilitates the interaction between dynein and dynactin and activates dynein processivity (the ability to move along a microtubule for a long distance without falling off the track). Predominantly recruits 2 dyneins, which increases both the force and speed of the microtubule motor. Component of the FTS/Hook/FHIP complex (FHF complex). The FHF complex may function to promote vesicle trafficking and/or fusion via the homotypic vesicular protein sorting complex (the HOPS complex). May regulate clearance of endocytosed receptors such as MSR1. Participates in defining the architecture and localization of the Golgi complex. FHF complex promotes the distribution of AP-4 complex to the perinuclear area of the cell. In terms of biological role, (Microbial infection) Serves as a target for the spiC protein from Salmonella typhimurium, which inactivates it, leading to a strong alteration in cellular trafficking. This chain is Protein Hook homolog 3 (Hook3), found in Mus musculus (Mouse).